A 452-amino-acid chain; its full sequence is Phosphoglucosamine mutase (452 aa).

Ser105 acts as the Phosphoserine intermediate in catalysis. Mg(2+) is bound by residues Ser105, Asp244, Asp246, and Asp248. A Phosphoserine modification is found at Ser105.

This sequence belongs to the phosphohexose mutase family. Mg(2+) is required as a cofactor. Activated by phosphorylation.

The catalysed reaction is alpha-D-glucosamine 1-phosphate = D-glucosamine 6-phosphate. Functionally, catalyzes the conversion of glucosamine-6-phosphate to glucosamine-1-phosphate. The chain is Phosphoglucosamine mutase from Blochmanniella floridana.